A 270-amino-acid chain; its full sequence is tRNA pseudouridine synthase A (270 aa).

The Nucleophile role is filled by aspartate 51. Tyrosine 109 provides a ligand contact to substrate.

The protein belongs to the tRNA pseudouridine synthase TruA family. In terms of assembly, homodimer.

The enzyme catalyses uridine(38/39/40) in tRNA = pseudouridine(38/39/40) in tRNA. Functionally, formation of pseudouridine at positions 38, 39 and 40 in the anticodon stem and loop of transfer RNAs. This is tRNA pseudouridine synthase A from Burkholderia vietnamiensis (strain G4 / LMG 22486) (Burkholderia cepacia (strain R1808)).